The sequence spans 110 residues: BolA-like protein 3 (110 aa).

It belongs to the BolA/IbaG family. In terms of assembly, interacts with NFU1.

The protein resides in the mitochondrion. Acts as a mitochondrial iron-sulfur (Fe-S) cluster assembly factor that facilitates (Fe-S) cluster insertion into a subset of mitochondrial proteins. Probably acts together with NFU1. This Bos taurus (Bovine) protein is BolA-like protein 3 (BOLA3).